The chain runs to 204 residues: Thymidylate kinase (204 aa).

Residue 13–20 coordinates ATP; sequence GIDGSGKS.

This sequence belongs to the thymidylate kinase family.

It catalyses the reaction dTMP + ATP = dTDP + ADP. Phosphorylation of dTMP to form dTDP in both de novo and salvage pathways of dTTP synthesis. The chain is Thymidylate kinase from Leptospira interrogans serogroup Icterohaemorrhagiae serovar copenhageni (strain Fiocruz L1-130).